A 140-amino-acid polypeptide reads, in one-letter code: uncharacterized protein (140 aa).

This is an uncharacterized protein from Homo sapiens (Human).